Reading from the N-terminus, the 360-residue chain is Phospho-N-acetylmuramoyl-pentapeptide-transferase (360 aa).

The Periplasmic segment spans residues 1–25; the sequence is MLVWLAEHLVKYYSGFNVFSYLTFR. Residues 26-46 traverse the membrane as a helical segment; sequence AIVSLLTALFISLWMGPRMIA. Over 47-71 the chain is Cytoplasmic; that stretch reads HLQKLSFGQVVRNDGPESHFSKRGT. A helical transmembrane segment spans residues 72-92; it reads PTMGGIMILTAIVISVLLWAY. P93 is a topological domain (periplasmic). Residues 94 to 114 traverse the membrane as a helical segment; sequence SNPYVWCVLVVLVGYGIIGFV. Residues 115–131 lie on the Cytoplasmic side of the membrane; the sequence is DDYRKVVRKDTKGLIAR. Residues 132–152 traverse the membrane as a helical segment; sequence WKYFWMSVIALGVAFALYLAG. Topologically, residues 153 to 167 are periplasmic; the sequence is KDTPATQLVVPFFKD. Residues 168–188 traverse the membrane as a helical segment; that stretch reads VMPQLGLFYILLAYFVIVGTG. The Cytoplasmic portion of the chain corresponds to 189–198; the sequence is NAVNLTDGLD. The chain crosses the membrane as a helical span at residues 199 to 219; the sequence is GLAIMPTVFVAGGFALVAWAT. At 220–235 the chain is on the periplasmic side; it reads GNMNFASYLHIPYLRH. Residues 236-256 traverse the membrane as a helical segment; sequence AGELVIVCTAIVGAGLGFLWF. Residues 257–262 are Cytoplasmic-facing; sequence NTYPAQ. The chain crosses the membrane as a helical span at residues 263–283; it reads VFMGDVGSLALGGALGIIAVL. The Periplasmic segment spans residues 284–287; it reads LRQE. A helical transmembrane segment spans residues 288-308; it reads FLLVIMGGVFVVETLSVILQV. The Cytoplasmic segment spans residues 309-337; the sequence is GSFKLRGQRIFRMAPIHHHYELKGWPEPR. A helical membrane pass occupies residues 338–358; it reads VIVRFWIISLMLVLIGLATLK. Over 359–360 the chain is Periplasmic; that stretch reads VR.

It belongs to the glycosyltransferase 4 family. MraY subfamily. Mg(2+) is required as a cofactor.

The protein resides in the cell inner membrane. It catalyses the reaction UDP-N-acetyl-alpha-D-muramoyl-L-alanyl-gamma-D-glutamyl-meso-2,6-diaminopimeloyl-D-alanyl-D-alanine + di-trans,octa-cis-undecaprenyl phosphate = di-trans,octa-cis-undecaprenyl diphospho-N-acetyl-alpha-D-muramoyl-L-alanyl-D-glutamyl-meso-2,6-diaminopimeloyl-D-alanyl-D-alanine + UMP. It functions in the pathway cell wall biogenesis; peptidoglycan biosynthesis. Catalyzes the initial step of the lipid cycle reactions in the biosynthesis of the cell wall peptidoglycan: transfers peptidoglycan precursor phospho-MurNAc-pentapeptide from UDP-MurNAc-pentapeptide onto the lipid carrier undecaprenyl phosphate, yielding undecaprenyl-pyrophosphoryl-MurNAc-pentapeptide, known as lipid I. This is Phospho-N-acetylmuramoyl-pentapeptide-transferase from Escherichia coli O7:K1 (strain IAI39 / ExPEC).